The primary structure comprises 369 residues: tRNA/tmRNA (uracil-C(5))-methyltransferase (369 aa).

Residues Gln-190, Tyr-218, Asn-223, Glu-239, and Asp-301 each coordinate S-adenosyl-L-methionine. Cys-326 serves as the catalytic Nucleophile. Residue Glu-360 is the Proton acceptor of the active site.

Belongs to the class I-like SAM-binding methyltransferase superfamily. RNA M5U methyltransferase family. TrmA subfamily.

It catalyses the reaction uridine(54) in tRNA + S-adenosyl-L-methionine = 5-methyluridine(54) in tRNA + S-adenosyl-L-homocysteine + H(+). It carries out the reaction uridine(341) in tmRNA + S-adenosyl-L-methionine = 5-methyluridine(341) in tmRNA + S-adenosyl-L-homocysteine + H(+). In terms of biological role, dual-specificity methyltransferase that catalyzes the formation of 5-methyluridine at position 54 (m5U54) in all tRNAs, and that of position 341 (m5U341) in tmRNA (transfer-mRNA). This chain is tRNA/tmRNA (uracil-C(5))-methyltransferase, found in Vibrio atlanticus (strain LGP32) (Vibrio splendidus (strain Mel32)).